The following is a 238-amino-acid chain: Zinc import ATP-binding protein ZnuC (238 aa).

One can recognise an ABC transporter domain in the interval V5–K220. G37 to S44 serves as a coordination point for ATP.

This sequence belongs to the ABC transporter superfamily. Zinc importer (TC 3.A.1.15.5) family. In terms of assembly, the complex is composed of two ATP-binding proteins (ZnuC), two transmembrane proteins (ZnuB) and a solute-binding protein (ZnuA).

The protein localises to the cell inner membrane. The catalysed reaction is Zn(2+)(out) + ATP(in) + H2O(in) = Zn(2+)(in) + ADP(in) + phosphate(in) + H(+)(in). Functionally, part of the ABC transporter complex ZnuABC involved in zinc import. Responsible for energy coupling to the transport system. The chain is Zinc import ATP-binding protein ZnuC from Buchnera aphidicola subsp. Acyrthosiphon pisum (strain APS) (Acyrthosiphon pisum symbiotic bacterium).